Reading from the N-terminus, the 950-residue chain is Double-stranded RNA-binding protein Staufen homolog (950 aa).

Disordered stretches follow at residues 25–168 (VSGA…QQQQ), 202–274 (QQQL…QPST), and 288–342 (VTPV…NTKE). Low complexity predominate over residues 31-43 (QQRSMMSQQRGGS). Residues 45-66 (AINSSKSPYQLQTSSISQFSHL) show a composition bias toward polar residues. Residues 67-77 (QQQQQQQQQQQ) show a composition bias toward low complexity. A compositionally biased stretch (polar residues) spans 78-122 (LVNNYHKQKQMSPDITSHQFSSSTGGGMPTQNGNYQSMSGSSIHT). 3 stretches are compositionally biased toward low complexity: residues 130 to 143 (QLSL…YSSQ), 153 to 168 (QQHH…QQQQ), and 202 to 253 (QQQL…ILQH). The span at 254–274 (SPTSGKSLSSAPHGTSVQPST) shows a compositional bias: polar residues. Residues 313-322 (SGRDSVHVSD) show a composition bias toward basic and acidic residues. 4 consecutive DRBM domains span residues 344–411 (TPMC…ETKC), 435–546 (TPTV…ILKN), 578–645 (SEIS…ELRK), and 690–758 (NPIS…LLGY). Disordered regions lie at residues 758–833 (YTKP…HTAS) and 922–950 (DIHP…DFSK). The span at 765-782 (PTKSSFKNPSTGEAGQTN) shows a compositional bias: polar residues. The segment covering 922 to 937 (DIHPGGDGPQVKKDVL) has biased composition (basic and acidic residues).

As to expression, strongly expressed in nervous tissue (at protein level).

It localises to the perikaryon. Its subcellular location is the cell projection. Functionally, RNA-binding protein which is required for syntaxin location in sensory neurons during long-term synaptic facilitation. Binds to syntaxin mRNA and is required to maintain its accumulation at the axon hillock following neuronal stimulation and at the opposite pole in stable unstimulated sensory neurons. The chain is Double-stranded RNA-binding protein Staufen homolog from Aplysia californica (California sea hare).